A 262-amino-acid polypeptide reads, in one-letter code: Cytochrome c oxidase subunit 3 (262 aa).

7 helical membrane-spanning segments follow: residues 13–33 (PWPL…VMYM), 38–58 (GGGL…YVWW), 82–102 (GMLL…WAFF), 134–154 (TIIL…ILAG), 159–179 (GIIS…FQAL), 200–220 (ATGF…VCLF), and 237–257 (AAAW…VCIY).

Belongs to the cytochrome c oxidase subunit 3 family. As to quaternary structure, component of the cytochrome c oxidase (complex IV, CIV), a multisubunit enzyme composed of a catalytic core of 3 subunits and several supernumerary subunits. The complex exists as a monomer or a dimer and forms supercomplexes (SCs) in the inner mitochondrial membrane with ubiquinol-cytochrome c oxidoreductase (cytochrome b-c1 complex, complex III, CIII).

It localises to the mitochondrion inner membrane. It catalyses the reaction 4 Fe(II)-[cytochrome c] + O2 + 8 H(+)(in) = 4 Fe(III)-[cytochrome c] + 2 H2O + 4 H(+)(out). In terms of biological role, component of the cytochrome c oxidase, the last enzyme in the mitochondrial electron transport chain which drives oxidative phosphorylation. The respiratory chain contains 3 multisubunit complexes succinate dehydrogenase (complex II, CII), ubiquinol-cytochrome c oxidoreductase (cytochrome b-c1 complex, complex III, CIII) and cytochrome c oxidase (complex IV, CIV), that cooperate to transfer electrons derived from NADH and succinate to molecular oxygen, creating an electrochemical gradient over the inner membrane that drives transmembrane transport and the ATP synthase. Cytochrome c oxidase is the component of the respiratory chain that catalyzes the reduction of oxygen to water. Electrons originating from reduced cytochrome c in the intermembrane space (IMS) are transferred via the dinuclear copper A center (CU(A)) of subunit 2 and heme A of subunit 1 to the active site in subunit 1, a binuclear center (BNC) formed by heme A3 and copper B (CU(B)). The BNC reduces molecular oxygen to 2 water molecules using 4 electrons from cytochrome c in the IMS and 4 protons from the mitochondrial matrix. This chain is Cytochrome c oxidase subunit 3 (COX3), found in Prototheca wickerhamii.